The chain runs to 264 residues: ATP synthase subunit a (264 aa).

6 consecutive transmembrane segments (helical) span residues Ile-32–Val-52, Val-89–Met-109, Asp-134–Ile-154, Ile-177–Leu-197, Leu-208–Val-228, and Leu-235–Val-255.

Belongs to the ATPase A chain family. In terms of assembly, F-type ATPases have 2 components, CF(1) - the catalytic core - and CF(0) - the membrane proton channel. CF(1) has five subunits: alpha(3), beta(3), gamma(1), delta(1), epsilon(1). CF(0) has three main subunits: a(1), b(2) and c(9-12). The alpha and beta chains form an alternating ring which encloses part of the gamma chain. CF(1) is attached to CF(0) by a central stalk formed by the gamma and epsilon chains, while a peripheral stalk is formed by the delta and b chains.

It is found in the cell inner membrane. Its function is as follows. Key component of the proton channel; it plays a direct role in the translocation of protons across the membrane. This Shewanella piezotolerans (strain WP3 / JCM 13877) protein is ATP synthase subunit a.